A 748-amino-acid chain; its full sequence is Catalase-peroxidase (748 aa).

Residues Trp92–Tyr238 constitute a cross-link (tryptophyl-tyrosyl-methioninium (Trp-Tyr) (with M-264)). The active-site Proton acceptor is His93. A cross-link (tryptophyl-tyrosyl-methioninium (Tyr-Met) (with W-92)) is located at residues Tyr238–Met264. His279 is a heme b binding site.

Belongs to the peroxidase family. Peroxidase/catalase subfamily. In terms of assembly, homodimer or homotetramer. The cofactor is heme b. Post-translationally, formation of the three residue Trp-Tyr-Met cross-link is important for the catalase, but not the peroxidase activity of the enzyme.

It carries out the reaction H2O2 + AH2 = A + 2 H2O. The catalysed reaction is 2 H2O2 = O2 + 2 H2O. Its function is as follows. Bifunctional enzyme with both catalase and broad-spectrum peroxidase activity. This chain is Catalase-peroxidase, found in Xanthomonas euvesicatoria pv. vesicatoria (strain 85-10) (Xanthomonas campestris pv. vesicatoria).